The primary structure comprises 1280 residues: Multidrug resistance protein 1 (1280 aa).

Residues 1-72 are Cytoplasmic-facing; the sequence is MSRAHAAYAN…YADATDRVLM (72 aa). In terms of domain architecture, ABC transmembrane type-1 1 spans 72-357; that stretch reads MIAGTAFAVA…VAPSRTAFTE (286 aa). The next 6 membrane-spanning stretches (helical) occupy residues 73–93, 120–140, 189–209, 216–236, 297–317, and 326–345; these read IAGTAFAVACGAGMPVFSFIF, YVGIAMLIACAGHVMCWTVAA, KLSQGIMNGSMGVIGYIAGFV, LMMIGMMPFIIVMAAIIGSIV, LSAAVIMALMYVSYTVAFFFG, and RDMADIISTFLAVLMGSFGL. Over 346-712 the chain is Cytoplasmic; that stretch reads GFVAPSRTAF…MRMNKDKAWA (367 aa). The ABC transporter 1 domain occupies 391 to 634; sequence IEFRNVRFAY…DGEFAAVAKM (244 aa). 426 to 433 provides a ligand contact to ATP; the sequence is GASGCGKS. 6 helical membrane-spanning segments follow: residues 713 to 733, 762 to 781, 837 to 857, 858 to 878, 938 to 958, and 976 to 996; these read VALGILSSVVIGSARPASSIV, PLFIVFAVANFSGWILHGFY, IGLKVQTMCIIASGLVVGFIY, QWKLALVALACMPLMIGCSLT, IIAGGIYGITQFIFYGVYALC, and VMIASMSILFGAQNAGEAGAF. In terms of domain architecture, ABC transmembrane type-1 2 spans 713–1002; sequence VALGILSSVV…AGAFATKLAD (290 aa). The ABC transporter 2 domain maps to 1036–1274; it reads IEYRNVQFIY…GGEYKTRYDL (239 aa). 1071 to 1078 is an ATP binding site; that stretch reads GQTGCGKS. An N-linked (GlcNAc...) asparagine glycan is attached at Asn-1113.

The protein belongs to the ABC transporter superfamily. ABCB family. Multidrug resistance exporter (TC 3.A.1.201) subfamily.

It is found in the membrane. The enzyme catalyses ATP + H2O + xenobioticSide 1 = ADP + phosphate + xenobioticSide 2.. In terms of biological role, energy-dependent efflux pump responsible for decreased drug accumulation in multi-drug-resistant cells. Confers vinblastine resistance. The chain is Multidrug resistance protein 1 (MDR1) from Leishmania enriettii.